A 573-amino-acid chain; its full sequence is Sulfite reductase [NADPH] hemoprotein beta-component (573 aa).

C438, C444, C483, and C487 together coordinate [4Fe-4S] cluster. Residue C487 participates in siroheme binding.

Belongs to the nitrite and sulfite reductase 4Fe-4S domain family. In terms of assembly, alpha(8)-beta(8). The alpha component is a flavoprotein, the beta component is a hemoprotein. Siroheme serves as cofactor. Requires [4Fe-4S] cluster as cofactor.

It catalyses the reaction hydrogen sulfide + 3 NADP(+) + 3 H2O = sulfite + 3 NADPH + 4 H(+). Its pathway is sulfur metabolism; hydrogen sulfide biosynthesis; hydrogen sulfide from sulfite (NADPH route): step 1/1. Its function is as follows. Component of the sulfite reductase complex that catalyzes the 6-electron reduction of sulfite to sulfide. This is one of several activities required for the biosynthesis of L-cysteine from sulfate. The protein is Sulfite reductase [NADPH] hemoprotein beta-component of Staphylococcus haemolyticus (strain JCSC1435).